We begin with the raw amino-acid sequence, 249 residues long: MIT domain-containing protein 1 (249 aa).

Residues 8-86 (QDSDSTAAVA…KYLDQEKEDG (79 aa)) form the MIT domain. The important for association with membranes stretch occupies residues 168-231 (SGLEEIKQSL…SLGYYDLDLR (64 aa)).

Homodimer. Interacts (via MIT domain) with CHMP1A, CHMP1B, CHMP2A and IST1.

It localises to the late endosome membrane. The protein resides in the midbody. Its subcellular location is the membrane. In terms of biological role, required for efficient abscission at the end of cytokinesis, together with components of the ESCRT-III complex. The chain is MIT domain-containing protein 1 (Mitd1) from Mus musculus (Mouse).